A 419-amino-acid chain; its full sequence is UDP-N-acetylglucosamine 1-carboxyvinyltransferase 1 (419 aa).

Position 22–23 (22–23 (KN)) interacts with phosphoenolpyruvate. Arginine 92 provides a ligand contact to UDP-N-acetyl-alpha-D-glucosamine. The active-site Proton donor is the cysteine 116. 2-(S-cysteinyl)pyruvic acid O-phosphothioketal is present on cysteine 116. UDP-N-acetyl-alpha-D-glucosamine is bound by residues 121–125 (RPIDL), aspartate 306, and isoleucine 328.

Belongs to the EPSP synthase family. MurA subfamily.

It is found in the cytoplasm. It carries out the reaction phosphoenolpyruvate + UDP-N-acetyl-alpha-D-glucosamine = UDP-N-acetyl-3-O-(1-carboxyvinyl)-alpha-D-glucosamine + phosphate. Its pathway is cell wall biogenesis; peptidoglycan biosynthesis. Cell wall formation. Adds enolpyruvyl to UDP-N-acetylglucosamine. The sequence is that of UDP-N-acetylglucosamine 1-carboxyvinyltransferase 1 from Streptococcus agalactiae serotype Ia (strain ATCC 27591 / A909 / CDC SS700).